The sequence spans 295 residues: Nucleotide-binding protein SSU98_0619 (295 aa).

12 to 19 (GMSGAGKT) contributes to the ATP binding site. 62-65 (DMRS) contacts GTP.

Belongs to the RapZ-like family.

Its function is as follows. Displays ATPase and GTPase activities. In Streptococcus suis (strain 98HAH33), this protein is Nucleotide-binding protein SSU98_0619.